The primary structure comprises 249 residues: MARHLPFLLDADPTAPFPPAAQALRDPDGLLAIGGDLAPQRLLNAYAHGIFPWFSQDQPILWWSPDPRMVFRTDALRLSSRFRRQLRSSSWTVRADTAFEQVIDACASVPRAGQDGTWITAQMQQAYIALHELGHAHSLEVFDGTRLVGGIYGVAIGQMFFGESMFSAQSGGSKVALAALAMHLHTEGWPLLDAQVENPHLLSLGAQRLPRAQFLQQVQLQVARPALPGTWSGRYGQRPASSLGEARLT.

The protein belongs to the L/F-transferase family.

It localises to the cytoplasm. It carries out the reaction N-terminal L-lysyl-[protein] + L-leucyl-tRNA(Leu) = N-terminal L-leucyl-L-lysyl-[protein] + tRNA(Leu) + H(+). The catalysed reaction is N-terminal L-arginyl-[protein] + L-leucyl-tRNA(Leu) = N-terminal L-leucyl-L-arginyl-[protein] + tRNA(Leu) + H(+). The enzyme catalyses L-phenylalanyl-tRNA(Phe) + an N-terminal L-alpha-aminoacyl-[protein] = an N-terminal L-phenylalanyl-L-alpha-aminoacyl-[protein] + tRNA(Phe). Functionally, functions in the N-end rule pathway of protein degradation where it conjugates Leu, Phe and, less efficiently, Met from aminoacyl-tRNAs to the N-termini of proteins containing an N-terminal arginine or lysine. This is Leucyl/phenylalanyl-tRNA--protein transferase from Xanthomonas axonopodis pv. citri (strain 306).